The primary structure comprises 281 residues: Probable feruloyl esterase A (281 aa).

The N-terminal stretch at 1–21 is a signal peptide; that stretch reads MKQFSAKYALILLATAGQALA. 3 disulfide bridges follow: C50-C279, C112-C115, and C248-C255. Residue D98 participates in substrate binding. An N-linked (GlcNAc...) asparagine glycan is attached at N100. Substrate is bound at residue Y101. S154 (nucleophile) is an active-site residue. D215 functions as the Charge relay system in the catalytic mechanism. Residue H268 participates in substrate binding. H268 functions as the Charge relay system in the catalytic mechanism.

Belongs to the AB hydrolase superfamily. FaeA family.

The protein localises to the secreted. It catalyses the reaction feruloyl-polysaccharide + H2O = ferulate + polysaccharide.. In terms of biological role, involved in degradation of plant cell walls. Hydrolyzes the feruloyl-arabinose ester bond in arabinoxylans, and the feruloyl-galactose ester bond in pectin. The protein is Probable feruloyl esterase A (faeA) of Aspergillus niger (strain ATCC MYA-4892 / CBS 513.88 / FGSC A1513).